Consider the following 384-residue polypeptide: S-adenosylmethionine synthase (384 aa).

His15 provides a ligand contact to ATP. Asp17 contributes to the Mg(2+) binding site. K(+) is bound at residue Glu43. Positions 56 and 99 each coordinate L-methionine. A flexible loop region spans residues Gln99–Arg109. ATP contacts are provided by residues Asp164–Lys166, Arg230–Phe231, Asp239, Arg245–Lys246, Ala262, and Lys266. Residue Asp239 coordinates L-methionine. Lys270 is a binding site for L-methionine.

Belongs to the AdoMet synthase family. As to quaternary structure, homotetramer; dimer of dimers. Requires Mg(2+) as cofactor. The cofactor is K(+).

It is found in the cytoplasm. It carries out the reaction L-methionine + ATP + H2O = S-adenosyl-L-methionine + phosphate + diphosphate. It participates in amino-acid biosynthesis; S-adenosyl-L-methionine biosynthesis; S-adenosyl-L-methionine from L-methionine: step 1/1. Catalyzes the formation of S-adenosylmethionine (AdoMet) from methionine and ATP. The overall synthetic reaction is composed of two sequential steps, AdoMet formation and the subsequent tripolyphosphate hydrolysis which occurs prior to release of AdoMet from the enzyme. This Histophilus somni (strain 129Pt) (Haemophilus somnus) protein is S-adenosylmethionine synthase.